A 103-amino-acid polypeptide reads, in one-letter code: Large ribosomal subunit protein bL21 (103 aa).

It belongs to the bacterial ribosomal protein bL21 family. In terms of assembly, part of the 50S ribosomal subunit. Contacts protein L20.

In terms of biological role, this protein binds to 23S rRNA in the presence of protein L20. The protein is Large ribosomal subunit protein bL21 of Wolinella succinogenes (strain ATCC 29543 / DSM 1740 / CCUG 13145 / JCM 31913 / LMG 7466 / NCTC 11488 / FDC 602W) (Vibrio succinogenes).